The following is a 200-amino-acid chain: VSSVISSSLFEKMLLHRGFYTYDAFIAAAKSFPAFATTGSTDVRKREVAAFLAQTSHETTGGWPTAPDGPYELGSTSDYFGRGPIQISYNYNYGAAGKAIGVDLLRNPDLVTSDNTVEFKTALWFWMTPQSPKPSSHDVITGRWSPSSTDKAAGRVPGYGVLTNIIDGGVECGKGQESHVADRIGYYKDNLDCYNQKPFA.

E58 acts as the Proton donor in catalysis.

This sequence belongs to the glycosyl hydrolase 19 family. Chitinase class I subfamily.

The catalysed reaction is Random endo-hydrolysis of N-acetyl-beta-D-glucosaminide (1-&gt;4)-beta-linkages in chitin and chitodextrins.. Its function is as follows. This protein functions as a defense against chitin-containing fungal pathogens. The sequence is that of Endochitinase from Avena sativa (Oat).